A 554-amino-acid polypeptide reads, in one-letter code: Hydroxylamine reductase (554 aa).

Positions 3, 6, 18, and 25 each coordinate [2Fe-2S] cluster. Positions 252, 276, 320, 408, 436, 461, 495, and 497 each coordinate hybrid [4Fe-2O-2S] cluster. C408 is modified (cysteine persulfide).

The protein belongs to the HCP family. The cofactor is [2Fe-2S] cluster. Hybrid [4Fe-2O-2S] cluster is required as a cofactor.

It is found in the cytoplasm. It catalyses the reaction A + NH4(+) + H2O = hydroxylamine + AH2 + H(+). Functionally, catalyzes the reduction of hydroxylamine to form NH(3) and H(2)O. This chain is Hydroxylamine reductase, found in Shewanella sp. (strain MR-4).